Consider the following 199-residue polypeptide: uncharacterized protein (199 aa).

Residues 1 to 28 (MKKLATVGSLIVTSTLVFSSMPFQNAHA) form the signal peptide.

It localises to the secreted. This is an uncharacterized protein from Staphylococcus aureus (strain NCTC 8325 / PS 47).